The following is a 357-amino-acid chain: Holliday junction branch migration complex subunit RuvB (357 aa).

Over residues 1–10 the composition is skewed to polar residues; sequence MAIQSDSLSS. A disordered region spans residues 1 to 30; it reads MAIQSDSLSSRPDAPRLVAPAPASPNEESI. The interval 5 to 195 is large ATPase domain (RuvB-L); that stretch reads SDSLSSRPDA…FGIVSRLEFY (191 aa). Residues Leu34, Arg35, Gly76, Lys79, Thr80, Thr81, 142–144, Arg185, Tyr195, and Arg232 contribute to the ATP site; that span reads EDF. Thr80 contacts Mg(2+). The segment at 196–266 is small ATPAse domain (RuvB-S); it reads NTDDLAHIVT…AANQALAMLE (71 aa). The head domain (RuvB-H) stretch occupies residues 269–357; the sequence is PQGLDLMDRK…QPSSGDLFGA (89 aa). 3 residues coordinate DNA: Arg305, Arg324, and Arg329.

This sequence belongs to the RuvB family. In terms of assembly, homohexamer. Forms an RuvA(8)-RuvB(12)-Holliday junction (HJ) complex. HJ DNA is sandwiched between 2 RuvA tetramers; dsDNA enters through RuvA and exits via RuvB. An RuvB hexamer assembles on each DNA strand where it exits the tetramer. Each RuvB hexamer is contacted by two RuvA subunits (via domain III) on 2 adjacent RuvB subunits; this complex drives branch migration. In the full resolvosome a probable DNA-RuvA(4)-RuvB(12)-RuvC(2) complex forms which resolves the HJ.

The protein resides in the cytoplasm. It catalyses the reaction ATP + H2O = ADP + phosphate + H(+). Its function is as follows. The RuvA-RuvB-RuvC complex processes Holliday junction (HJ) DNA during genetic recombination and DNA repair, while the RuvA-RuvB complex plays an important role in the rescue of blocked DNA replication forks via replication fork reversal (RFR). RuvA specifically binds to HJ cruciform DNA, conferring on it an open structure. The RuvB hexamer acts as an ATP-dependent pump, pulling dsDNA into and through the RuvAB complex. RuvB forms 2 homohexamers on either side of HJ DNA bound by 1 or 2 RuvA tetramers; 4 subunits per hexamer contact DNA at a time. Coordinated motions by a converter formed by DNA-disengaged RuvB subunits stimulates ATP hydrolysis and nucleotide exchange. Immobilization of the converter enables RuvB to convert the ATP-contained energy into a lever motion, pulling 2 nucleotides of DNA out of the RuvA tetramer per ATP hydrolyzed, thus driving DNA branch migration. The RuvB motors rotate together with the DNA substrate, which together with the progressing nucleotide cycle form the mechanistic basis for DNA recombination by continuous HJ branch migration. Branch migration allows RuvC to scan DNA until it finds its consensus sequence, where it cleaves and resolves cruciform DNA. The polypeptide is Holliday junction branch migration complex subunit RuvB (Bordetella avium (strain 197N)).